The chain runs to 207 residues: Protein GrpE (207 aa).

This sequence belongs to the GrpE family. In terms of assembly, homodimer.

The protein resides in the cytoplasm. Participates actively in the response to hyperosmotic and heat shock by preventing the aggregation of stress-denatured proteins, in association with DnaK and GrpE. It is the nucleotide exchange factor for DnaK and may function as a thermosensor. Unfolded proteins bind initially to DnaJ; upon interaction with the DnaJ-bound protein, DnaK hydrolyzes its bound ATP, resulting in the formation of a stable complex. GrpE releases ADP from DnaK; ATP binding to DnaK triggers the release of the substrate protein, thus completing the reaction cycle. Several rounds of ATP-dependent interactions between DnaJ, DnaK and GrpE are required for fully efficient folding. This chain is Protein GrpE, found in Pelodictyon phaeoclathratiforme (strain DSM 5477 / BU-1).